An 861-amino-acid polypeptide reads, in one-letter code: MGEISQEAVERYLEKNPCFAKEYFDKKLRVEALGVIFKNSHAGVQTGLSLPEMTQVEESAVCLELLQCMQDEAGSAEQMAHRALQRLAQLLQADCCSMFSCRARNGIPEVASRLLNVTPTSKFEDNLVAPDREVVFPLDIGIVGWVAHVKKALNVSDVKKNSHFSDFMDKQTGYVTRNLLAVPIVAGKEVLAVVMAVNKISAPEFSKQDEEVFSKYLSFVAVALRLQHTSYLYSVESRRSQILMWSANKVFEELTDVERQFHKALYTIRTYLNCDRYSIGLLDMTKEKEFYDEWPIKLGEVEPYKGPKTPDGREIIFYKIIDYILHGKEEINVIPSPPADHWTLVSGLPTYVAENGFICNMLNAPADEYFTFQKGPVDETGWVIKNVLSLPIVNKKEDIVGVATFYNRKDGKPFDEHDEHITETLTQFLGWSLLNTDTYERVNKLESRKDIAQEMVMNLTKATPDEISSILKFKEKLNVEVIEECEERQLLAILKEDLPDPRTADLYEFCFSDFPITEHELVKCGLRLFLEINVVEKFKVPVEVLTRWMYTVRKGYRPVTYHNWRHGFNVGQTMFTLLMTGRLKKYYTDLEAFAMLAAAFCHDIDHRGTNNLYQMKSTSPLARLHGTSILERHHLEYSKTLLQDESLNIFQNLNKRQFETVIHLFEVAIIATDLALYFKKRTMFQKIVDTCEQMQSEEETIKYVTSDPTKKEVIMAMMMTACDLSAITKPWEVQSQVALLVANEFWEQGDLERTVLQQQPIPMMDRSKKDELPKLQVGFIDFVCTFVYKEFSRFHGEITPMLNGLQNNRVEWKSLAEEYEAKVKVTEEEAGKQEEEASDGKAATDLGGSAEDKKSKTCLML.

GAF domains lie at 75–224 (SAEQ…AVAL) and 256–433 (DVER…GWSL). 3',5'-cyclic GMP contacts are provided by residues Ser-97, Asn-116, 169–172 (DKQT), and Thr-176. One can recognise a PDEase domain in the interval 486-819 (EERQLLAILK…VEWKSLAEEY (334 aa)). His-562 acts as the Proton donor in catalysis. Residues His-566, His-602, Asp-603, and Asp-723 each contribute to the a divalent metal cation site. Over residues 826 to 839 (TEEEAGKQEEEASD) the composition is skewed to basic and acidic residues. A disordered region spans residues 826 to 861 (TEEEAGKQEEEASDGKAATDLGGSAEDKKSKTCLML). Cys-858 carries the cysteine methyl ester modification. Cys-858 carries S-geranylgeranyl cysteine lipidation. The propeptide at 859–861 (LML) is removed in mature form.

It belongs to the cyclic nucleotide phosphodiesterase family. Composed of two alpha' subunits that are associated with 3 smaller proteins of 11, 13, and 15 kDa. It depends on a divalent metal cation as a cofactor.

The protein resides in the cell membrane. The catalysed reaction is 3',5'-cyclic GMP + H2O = GMP + H(+). Its function is as follows. As cone-specific cGMP phosphodiesterase, it plays an essential role in light detection and cone phototransduction by rapidly decreasing intracellular levels of cGMP. This is Cone cGMP-specific 3',5'-cyclic phosphodiesterase subunit alpha' (Pde6c) from Mus musculus (Mouse).